The following is a 178-amino-acid chain: Signaling threshold-regulating transmembrane adapter 1 (178 aa).

Over 1-23 (MSRENNCTTADLAWGIPSITQAW) the chain is Extracellular. Residue Asn-6 is glycosylated (N-linked (GlcNAc...) asparagine). Residues 24-44 (GLWALFGVVTMLLLISLAALL) form a helical; Signal-anchor for type III membrane protein membrane-spanning segment. The Cytoplasmic segment spans residues 45-178 (SQWTRGRRRT…AYANSQPAPS (134 aa)). 2 positions are modified to phosphoserine: Ser-62 and Ser-65. A Phosphotyrosine modification is found at Tyr-72. Residues 72-75 (YGNL) are interaction with GRB2. The tract at residues 81-102 (GRLSEESRSEEQDPSSGGLARG) is disordered. Phosphoserine is present on residues Ser-84, Ser-87, and Ser-89. Tyr-109 carries the post-translational modification Phosphotyrosine. Phosphothreonine is present on Thr-126. An interaction with PTPN11 region spans residues 128 to 133 (IKYCEV). Phosphotyrosine is present on residues Tyr-130 and Tyr-151. The segment at 151 to 154 (YASV) is interaction with CSK. At Ser-164 the chain carries Phosphoserine. Tyr-170 bears the Phosphotyrosine mark. Positions 170-173 (YANS) are interaction with GRB2.

In terms of assembly, homodimer; disulfide-linked. When phosphorylated, interacts with PTPN11/SHP2, GRB2 and CSK. Post-translationally, phosphorylated on tyrosines upon TCR activation; which promotes recruitment of PTPN11, GRB2 and CSK. Lymph node, spleen and thymus.

The protein localises to the cell membrane. In terms of biological role, negatively regulates T-cell antigen receptor (TCR)-mediated signaling. Involved in positive selection of T-cells. This chain is Signaling threshold-regulating transmembrane adapter 1 (Sit1), found in Rattus norvegicus (Rat).